We begin with the raw amino-acid sequence, 151 residues long: UPF0178 protein PSHAb0045 (151 aa).

It belongs to the UPF0178 family.

The sequence is that of UPF0178 protein PSHAb0045 from Pseudoalteromonas translucida (strain TAC 125).